A 176-amino-acid polypeptide reads, in one-letter code: Cytochrome b (176 aa).

Transmembrane regions (helical) follow at residues 33–53 (FGSL…FLAM), 77–98 (WILR…YLHV), and 113–133 (WNIG…GYVL). Residues histidine 83 and histidine 97 each contribute to the heme b site.

Belongs to the cytochrome b family. The cytochrome bc1 complex contains 11 subunits: 3 respiratory subunits (MT-CYB, CYC1 and UQCRFS1), 2 core proteins (UQCRC1 and UQCRC2) and 6 low-molecular weight proteins (UQCRH/QCR6, UQCRB/QCR7, UQCRQ/QCR8, UQCR10/QCR9, UQCR11/QCR10 and a cleavage product of UQCRFS1). This cytochrome bc1 complex then forms a dimer. Heme b serves as cofactor.

The protein resides in the mitochondrion inner membrane. Functionally, component of the ubiquinol-cytochrome c reductase complex (complex III or cytochrome b-c1 complex) that is part of the mitochondrial respiratory chain. The b-c1 complex mediates electron transfer from ubiquinol to cytochrome c. Contributes to the generation of a proton gradient across the mitochondrial membrane that is then used for ATP synthesis. In Myotis leibii (Eastern small-footed myotis), this protein is Cytochrome b (MT-CYB).